Reading from the N-terminus, the 359-residue chain is Mannose-1-phosphate guanylyltransferase catalytic subunit beta (359 aa).

A substrate-binding domain region spans residues 2–221 (KALILVGGFG…EGFWMDVGQP (220 aa)). Asp-109 lines the GDP-alpha-D-mannose pocket. Asp-109 contacts Mg(2+). Lys-161 is a catalytic residue. Asp-217 contacts GDP-alpha-D-mannose. Asp-217 lines the Mg(2+) pocket. Residues 244-359 (ATGNGIIGPV…SSIPEPEIIM (116 aa)) are hexapeptide repeat domain.

It belongs to the transferase hexapeptide repeat family. In terms of assembly, component of the GMPPA-GMPPB mannose-1-phosphate guanylyltransferase complex composed of 4 GMPPA subunits and 8 gmppB subunits; the complex is organized into three layers, a central layer made up of 2 gmppA dimers sandwiched between two layers each made up of 2 gmppB dimers. gmppB catalytic activity is reduced when part of the complex and binding of GDP-alpha-D-Mannose by gmppA induces allosteric feedback inhibition of gmppB. Mg(2+) is required as a cofactor.

It carries out the reaction alpha-D-mannose 1-phosphate + GTP + H(+) = GDP-alpha-D-mannose + diphosphate. Its pathway is nucleotide-sugar biosynthesis; GDP-alpha-D-mannose biosynthesis; GDP-alpha-D-mannose from alpha-D-mannose 1-phosphate (GTP route): step 1/1. With respect to regulation, enzyme activity is reduced by incorporation into the GMPPA-GMPPB mannose-1-phosphate guanylyltransferase complex. Allosterically inhibited, when part of the GMPPA-GMPPB complex, by GDP-alpha-D-mannose binding to GMPPA. Its function is as follows. Catalytic subunit of the GMPPA-GMPPB mannose-1-phosphate guanylyltransferase complex. Catalyzes the formation of GDP-mannose, an essential precursor of glycan moieties of glycoproteins and glycolipids. Can catalyze the reverse reaction in vitro. Together with GMPPA regulates GDP-alpha-D-mannose levels. The sequence is that of Mannose-1-phosphate guanylyltransferase catalytic subunit beta (gmppB) from Dictyostelium discoideum (Social amoeba).